Consider the following 53-residue polypeptide: Zinc metalloproteinase-disintegrin-like alborhagin (53 aa).

The protein belongs to the venom metalloproteinase (M12B) family. P-III subfamily. P-IIIb sub-subfamily. Monomer. Zn(2+) serves as cofactor. In terms of processing, contains numerous disulfide bonds. Glycosylated. As to expression, expressed by the venom gland.

The protein resides in the secreted. With respect to regulation, alborhagin-induced platelet aggregation, but not shape change, is inhibited by EDTA, suggesting that the platelet activation (shape change) is independent of divalent cation or metalloproteinase activity. Its function is as follows. Induces platelet activation and glycoprotein VI (GP6)-dependent platelet aggregation. Induces ectodomain cleavage of GP6 by activating endogenous platelet metalloproteinases (probably ADAM10). Has fibrinogenolytic activity against the alpha chain of fibrinogen (FGA). Recognizes distinct binding sites as convulxin, since alborhagin has minimal effect on convulxin binding to GPVI-expressing cells. Disintegrin alborhagin-C: 42 kDa fragment of alborhagin autoproteolysed that does not show platelet activation. The chain is Zinc metalloproteinase-disintegrin-like alborhagin from Trimeresurus albolabris (White-lipped pit viper).